The sequence spans 383 residues: 8-amino-7-oxononanoate synthase (383 aa).

Arg21 contacts substrate. Position 108–109 (108–109 (GY)) interacts with pyridoxal 5'-phosphate. His133 serves as a coordination point for substrate. Pyridoxal 5'-phosphate-binding residues include Ser179, His207, and Thr233. An N6-(pyridoxal phosphate)lysine modification is found at Lys236. Position 350 (Thr350) interacts with substrate.

It belongs to the class-II pyridoxal-phosphate-dependent aminotransferase family. BioF subfamily. In terms of assembly, homodimer. The cofactor is pyridoxal 5'-phosphate.

It catalyses the reaction 6-carboxyhexanoyl-[ACP] + L-alanine + H(+) = (8S)-8-amino-7-oxononanoate + holo-[ACP] + CO2. The protein operates within cofactor biosynthesis; biotin biosynthesis. Functionally, catalyzes the decarboxylative condensation of pimeloyl-[acyl-carrier protein] and L-alanine to produce 8-amino-7-oxononanoate (AON), [acyl-carrier protein], and carbon dioxide. The chain is 8-amino-7-oxononanoate synthase from Yersinia pseudotuberculosis serotype IB (strain PB1/+).